We begin with the raw amino-acid sequence, 615 residues long: Dihydroxy-acid dehydratase (615 aa).

Mg(2+) is bound at residue Asp-81. Position 122 (Cys-122) interacts with [2Fe-2S] cluster. The Mg(2+) site is built by Asp-123 and Lys-124. At Lys-124 the chain carries N6-carboxylysine. Residue Cys-193 coordinates [2Fe-2S] cluster. Glu-489 provides a ligand contact to Mg(2+). Catalysis depends on Ser-515, which acts as the Proton acceptor.

The protein belongs to the IlvD/Edd family. As to quaternary structure, homodimer. It depends on [2Fe-2S] cluster as a cofactor. Mg(2+) serves as cofactor.

It carries out the reaction (2R)-2,3-dihydroxy-3-methylbutanoate = 3-methyl-2-oxobutanoate + H2O. It catalyses the reaction (2R,3R)-2,3-dihydroxy-3-methylpentanoate = (S)-3-methyl-2-oxopentanoate + H2O. It functions in the pathway amino-acid biosynthesis; L-isoleucine biosynthesis; L-isoleucine from 2-oxobutanoate: step 3/4. Its pathway is amino-acid biosynthesis; L-valine biosynthesis; L-valine from pyruvate: step 3/4. Functionally, functions in the biosynthesis of branched-chain amino acids. Catalyzes the dehydration of (2R,3R)-2,3-dihydroxy-3-methylpentanoate (2,3-dihydroxy-3-methylvalerate) into 2-oxo-3-methylpentanoate (2-oxo-3-methylvalerate) and of (2R)-2,3-dihydroxy-3-methylbutanoate (2,3-dihydroxyisovalerate) into 2-oxo-3-methylbutanoate (2-oxoisovalerate), the penultimate precursor to L-isoleucine and L-valine, respectively. This chain is Dihydroxy-acid dehydratase, found in Pseudomonas savastanoi pv. phaseolicola (strain 1448A / Race 6) (Pseudomonas syringae pv. phaseolicola (strain 1448A / Race 6)).